Here is a 266-residue protein sequence, read N- to C-terminus: Bax inhibitor 1 (266 aa).

Residues 1-22 (MPANYQSVPQDDPSVPNLAQAP) form a disordered region. The next 7 helical transmembrane spans lie at 70–90 (LFVT…SFWV), 92–112 (MHPW…FGLI), 123–143 (IFLF…ITFF), 147–167 (IILE…AFTF), 177–197 (GGFL…FFFV), 201–221 (PFID…YILF), and 240–260 (LMLY…LGML).

The protein belongs to the BI1 family. LFG subfamily.

It is found in the endoplasmic reticulum membrane. Its subcellular location is the mitochondrion membrane. The protein resides in the golgi apparatus membrane. The protein localises to the vacuole membrane. Links the unfolded protein response and programmed cell death and mediates mitochondrial-dependent apoptosis. Induces cell death and disruption of the mitochondrial transmembrane potential. In Schizosaccharomyces pombe (strain 972 / ATCC 24843) (Fission yeast), this protein is Bax inhibitor 1 (bxi1).